Reading from the N-terminus, the 20-residue chain is 23 kDa cell wall protein (20 aa).

Its subcellular location is the secreted. It is found in the cell wall. The polypeptide is 23 kDa cell wall protein (Solanum lycopersicum (Tomato)).